Reading from the N-terminus, the 372-residue chain is Cytochrome b (372 aa).

A run of 4 helical transmembrane segments spans residues 25-45, 69-90, 105-125, and 170-190; these read FGSMLLTCLALQISTGFFLAI, WTMQNLHAIGASMFFICIYIHI, WLSGTVLLITLMATAFFGYVL, and FFALHFILPFLIVSLSSIHII. Positions 75 and 89 each coordinate heme b. Positions 174 and 188 each coordinate heme b. H193 contacts a ubiquinone. A run of 4 helical transmembrane segments spans residues 218 to 238, 280 to 300, 312 to 332, and 339 to 358; these read YKDILMITVMITTLFSIMAFA, LGGTLALLMSVIILTTAPFTH, LAQMLFWTLIATFITITWTAT, and FILISQMASIIYFSFFIINP.

It belongs to the cytochrome b family. In terms of assembly, the cytochrome bc1 complex contains 3 respiratory subunits (MT-CYB, CYC1 and UQCRFS1), 2 core proteins (UQCRC1 and UQCRC2) and probably 6 low-molecular weight proteins. Heme b is required as a cofactor.

The protein resides in the mitochondrion inner membrane. Component of the ubiquinol-cytochrome c reductase complex (complex III or cytochrome b-c1 complex) that is part of the mitochondrial respiratory chain. The b-c1 complex mediates electron transfer from ubiquinol to cytochrome c. Contributes to the generation of a proton gradient across the mitochondrial membrane that is then used for ATP synthesis. The protein is Cytochrome b (MT-CYB) of Acanthophis antarcticus (Common death adder).